The sequence spans 91 residues: Early E3B 10.4 kDa protein (91 aa).

An N-terminal signal peptide occupies residues 1–22; sequence MIPRVFILLTLVALFCACSTLA. The Lumenal portion of the chain corresponds to 23–34; the sequence is AVSHIEVDCIPA. The chain crosses the membrane as a helical span at residues 35 to 60; the sequence is FTVYLLYGFVTLTLICSLITVVIAFI. Over 61 to 91 the chain is Cytoplasmic; that stretch reads QCIDWVCVRFAYLRHHPQYRDRTIAELLRIL.

This sequence belongs to the adenoviridae E3B family.

Its subcellular location is the host endoplasmic reticulum membrane. Its function is as follows. Down-regulates the EGF receptor. The protein is Early E3B 10.4 kDa protein of Homo sapiens (Human).